Reading from the N-terminus, the 97-residue chain is UPF0235 protein HAPS_1504 (97 aa).

Belongs to the UPF0235 family.

The chain is UPF0235 protein HAPS_1504 from Glaesserella parasuis serovar 5 (strain SH0165) (Haemophilus parasuis).